The chain runs to 66 residues: Large ribosomal subunit protein bL31 (66 aa).

Residues Cys-16, Cys-18, Cys-36, and Cys-39 each coordinate Zn(2+).

The protein belongs to the bacterial ribosomal protein bL31 family. Type A subfamily. In terms of assembly, part of the 50S ribosomal subunit. The cofactor is Zn(2+).

Binds the 23S rRNA. This Sulfurimonas denitrificans (strain ATCC 33889 / DSM 1251) (Thiomicrospira denitrificans (strain ATCC 33889 / DSM 1251)) protein is Large ribosomal subunit protein bL31.